Reading from the N-terminus, the 651-residue chain is Acetyl-coenzyme A synthetase (651 aa).

CoA-binding positions include 191 to 194 (RGGK), T311, and N335. ATP is bound by residues 387 to 389 (GEP), 411 to 416 (DTWWQT), D500, and R515. A CoA-binding site is contributed by S523. R526 serves as a coordination point for ATP. 3 residues coordinate Mg(2+): V537, H539, and V542. A CoA-binding site is contributed by R584. K609 carries the N6-acetyllysine modification.

The protein belongs to the ATP-dependent AMP-binding enzyme family. The cofactor is Mg(2+). Acetylated. Deacetylation by the SIR2-homolog deacetylase activates the enzyme.

The catalysed reaction is acetate + ATP + CoA = acetyl-CoA + AMP + diphosphate. Catalyzes the conversion of acetate into acetyl-CoA (AcCoA), an essential intermediate at the junction of anabolic and catabolic pathways. AcsA undergoes a two-step reaction. In the first half reaction, AcsA combines acetate with ATP to form acetyl-adenylate (AcAMP) intermediate. In the second half reaction, it can then transfer the acetyl group from AcAMP to the sulfhydryl group of CoA, forming the product AcCoA. The polypeptide is Acetyl-coenzyme A synthetase (Pseudomonas syringae pv. tomato (strain ATCC BAA-871 / DC3000)).